A 519-amino-acid polypeptide reads, in one-letter code: 2-isopropylmalate synthase (519 aa).

Residues 5-267 form the Pyruvate carboxyltransferase domain; that stretch reads VIIFDTTLRD…YTNIHHHEIY (263 aa). 4 residues coordinate Mn(2+): Asp14, His202, His204, and Asn238. The regulatory domain stretch occupies residues 392–519; it reads ALESFHIHST…NHKNTQHIKK (128 aa).

The protein belongs to the alpha-IPM synthase/homocitrate synthase family. LeuA type 1 subfamily. As to quaternary structure, homodimer. Mn(2+) is required as a cofactor.

It localises to the cytoplasm. It carries out the reaction 3-methyl-2-oxobutanoate + acetyl-CoA + H2O = (2S)-2-isopropylmalate + CoA + H(+). Its pathway is amino-acid biosynthesis; L-leucine biosynthesis; L-leucine from 3-methyl-2-oxobutanoate: step 1/4. Its function is as follows. Catalyzes the condensation of the acetyl group of acetyl-CoA with 3-methyl-2-oxobutanoate (2-ketoisovalerate) to form 3-carboxy-3-hydroxy-4-methylpentanoate (2-isopropylmalate). The protein is 2-isopropylmalate synthase of Blochmanniella floridana.